A 397-amino-acid chain; its full sequence is Lysophospholipid transporter LplT (397 aa).

At 1–17 (MSESVHTNTSLWSKGMK) the chain is on the periplasmic side. A helical membrane pass occupies residues 18-38 (AVIVAQFLSAFGDNALLFATL). At 39-52 (ALLKAQFYPEWSQP) the chain is on the cytoplasmic side. Residues 53–73 (ILQMVFVGAYILFAPFVGQVA) traverse the membrane as a helical segment. The Periplasmic portion of the chain corresponds to 74–90 (DSFAKGRVMMFANGLKL). The chain crosses the membrane as a helical span at residues 91 to 111 (LGAASICFGINPFLGYTLVGV). Over 112–144 (GAAAYSPAKYGILGELTTGSKLVKANGLMEAST) the chain is Cytoplasmic. The chain crosses the membrane as a helical span at residues 145–165 (IAAILLGSVAGGVLADWHILV). Residue A166 is a topological domain, periplasmic. A helical membrane pass occupies residues 167 to 187 (LAACALAYGGAVVANIYIPKL). At 188-226 (AAARPGQSWNLISMTRSFLNACTSLWRNGETRFSLVGTS) the chain is on the cytoplasmic side. The helical transmembrane segment at 227-247 (LFWGAGVTLRFLLVLWVPVAL) threads the bilayer. The Periplasmic segment spans residues 248–256 (GITDNATPT). Residues 257–277 (YLNAMVAIGIVVGAGAAAKLV) form a helical membrane-spanning segment. The Cytoplasmic segment spans residues 278–280 (TLE). The chain crosses the membrane as a helical span at residues 281-301 (TVSRCMPAGILIGVVVLIFSL). The Periplasmic segment spans residues 302–304 (QHE). The helical transmembrane segment at 305 to 325 (LLPAYALLMLIGVLGGFFVVP) threads the bilayer. Topologically, residues 326 to 343 (LNALLQERGKKSVGAGNA) are cytoplasmic. Residues 344-364 (IAVQNLGENSAMLLMLGIYSL) form a helical membrane-spanning segment. Residues 365–366 (AV) are Periplasmic-facing. A helical membrane pass occupies residues 367–387 (MVGIPVVPIGIGFGALFALAI). Residues 388-397 (TALWIWQRRH) lie on the Cytoplasmic side of the membrane.

The protein belongs to the major facilitator superfamily. LplT (TC 2.A.1.42) family.

Its subcellular location is the cell inner membrane. Functionally, catalyzes the facilitated diffusion of 2-acyl-glycero-3-phosphoethanolamine (2-acyl-GPE) into the cell. This chain is Lysophospholipid transporter LplT, found in Escherichia coli O6:K15:H31 (strain 536 / UPEC).